The chain runs to 185 residues: Intraflagellar transport protein 22 homolog (185 aa).

GTP contacts are provided by residues 10 to 17 (GPCESGKT), 63 to 67 (DCGGD), and 123 to 126 (HKPG). At Ser-137 the chain carries Phosphoserine.

It belongs to the small GTPase superfamily. Rab family. In terms of assembly, component of the IFT complex B, at least composed of IFT20, IFT22, IFT25, IFT27, IFT46, IFT52, TRAF3IP1/IFT54, IFT57, IFT74, IFT80, IFT81, and IFT88. Interacts with IFT88. Interacts with CFAP61.

It localises to the cell projection. Its subcellular location is the cilium. Functionally, small GTPase-like component of the intraflagellar transport (IFT) complex B. This is Intraflagellar transport protein 22 homolog (IFT22) from Macaca fascicularis (Crab-eating macaque).